The following is a 315-amino-acid chain: Transaldolase (315 aa).

The active-site Schiff-base intermediate with substrate is Lys131.

This sequence belongs to the transaldolase family. Type 1 subfamily. In terms of assembly, homodimer.

The protein resides in the cytoplasm. The catalysed reaction is D-sedoheptulose 7-phosphate + D-glyceraldehyde 3-phosphate = D-erythrose 4-phosphate + beta-D-fructose 6-phosphate. Its pathway is carbohydrate degradation; pentose phosphate pathway; D-glyceraldehyde 3-phosphate and beta-D-fructose 6-phosphate from D-ribose 5-phosphate and D-xylulose 5-phosphate (non-oxidative stage): step 2/3. Transaldolase is important for the balance of metabolites in the pentose-phosphate pathway. The sequence is that of Transaldolase from Actinobacillus pleuropneumoniae serotype 5b (strain L20).